We begin with the raw amino-acid sequence, 1596 residues long: Protein son of sevenless (1596 aa).

In terms of domain architecture, DH spans 248–434 (TYEETVKELI…HPLHCDLEKV (187 aa)). In terms of domain architecture, PH spans 480-588 (EFIREDSLSK…WMADLLMVIT (109 aa)). The N-terminal Ras-GEF domain occupies 637-792 (GVPMIKGATL…SVLKIVQRKN (156 aa)). The Ras-GEF domain occupies 829–1066 (HPLELARQLT…YNESLRIEPR (238 aa)). Disordered stretches follow at residues 1073-1105 (KFPR…LSNS), 1175-1212 (RNTS…AHVW), 1235-1291 (EHLP…TAST), 1340-1392 (RAVP…NHST), and 1465-1596 (PLPI…TNEE). Positions 1096 to 1105 (TNSSSKLSNS) are enriched in low complexity. Polar residues-rich tracts occupy residues 1175–1195 (RNTS…NNGE) and 1280–1291 (MQNSPTHSTAST). Residues 1352-1366 (ERTESCADMAQKRQA) are compositionally biased toward basic and acidic residues. A compositionally biased stretch (low complexity) spans 1469–1489 (SPAASSSTTTSPLTPAMSPMS). Over residues 1526-1542 (HHQHHATHLPHHPHQHH) the composition is skewed to basic residues. Residues serine 1550 and serine 1551 each carry the phosphoserine modification.

As to quaternary structure, may form a complex with sevenless and DRK.

Functionally, promotes the exchange of Ras-bound GDP by GTP. Functions in signaling pathways initiated by the sevenless and epidermal growth factor receptor tyrosine kinases; implies a role for the ras pathway in neuronal development. The protein is Protein son of sevenless (Sos) of Drosophila melanogaster (Fruit fly).